The sequence spans 65 residues: U12-theraphotoxin-Cg1a (65 aa).

The signal sequence occupies residues 1 to 21; that stretch reads MKTSVLLFMLGLTFLFDGLAA. Residues 22-29 constitute a propeptide that is removed on maturation; it reads INLQEGER. 3 disulfides stabilise this stretch: C31/C45, C38/C50, and C44/C57.

This sequence belongs to the neurotoxin 10 (Hwtx-1) family. 31 (Jztx-15) subfamily. As to expression, expressed by the venom gland.

It localises to the secreted. Functionally, probable ion channel inhibitor. This chain is U12-theraphotoxin-Cg1a, found in Chilobrachys guangxiensis (Chinese earth tiger tarantula).